The sequence spans 193 residues: 7-methyl-GTP pyrophosphatase (193 aa).

Asp-70 (proton acceptor) is an active-site residue.

Belongs to the Maf family. YceF subfamily. It depends on a divalent metal cation as a cofactor.

Its subcellular location is the cytoplasm. The enzyme catalyses N(7)-methyl-GTP + H2O = N(7)-methyl-GMP + diphosphate + H(+). Nucleoside triphosphate pyrophosphatase that hydrolyzes 7-methyl-GTP (m(7)GTP). May have a dual role in cell division arrest and in preventing the incorporation of modified nucleotides into cellular nucleic acids. The protein is 7-methyl-GTP pyrophosphatase of Vibrio parahaemolyticus serotype O3:K6 (strain RIMD 2210633).